We begin with the raw amino-acid sequence, 333 residues long: Beta-ketoacyl-[acyl-carrier-protein] synthase III (333 aa).

Residues Cys-117 and His-257 contribute to the active site. The interval 258-262 (QANLR) is ACP-binding. Asn-287 is a catalytic residue.

It belongs to the thiolase-like superfamily. FabH family. Homodimer.

The protein localises to the cytoplasm. The enzyme catalyses malonyl-[ACP] + acetyl-CoA + H(+) = 3-oxobutanoyl-[ACP] + CO2 + CoA. It functions in the pathway lipid metabolism; fatty acid biosynthesis. Functionally, catalyzes the condensation reaction of fatty acid synthesis by the addition to an acyl acceptor of two carbons from malonyl-ACP. Catalyzes the first condensation reaction which initiates fatty acid synthesis and may therefore play a role in governing the total rate of fatty acid production. Possesses both acetoacetyl-ACP synthase and acetyl transacylase activities. Its substrate specificity determines the biosynthesis of branched-chain and/or straight-chain of fatty acids. The protein is Beta-ketoacyl-[acyl-carrier-protein] synthase III of Azobacteroides pseudotrichonymphae genomovar. CFP2.